Reading from the N-terminus, the 514-residue chain is Histidine ammonia-lyase (514 aa).

Positions 147-149 form a cross-link, 5-imidazolinone (Ala-Gly); sequence ASG. 2,3-didehydroalanine (Ser) is present on Ser-148.

The protein belongs to the PAL/histidase family. Post-translationally, contains an active site 4-methylidene-imidazol-5-one (MIO), which is formed autocatalytically by cyclization and dehydration of residues Ala-Ser-Gly.

It localises to the cytoplasm. The enzyme catalyses L-histidine = trans-urocanate + NH4(+). It functions in the pathway amino-acid degradation; L-histidine degradation into L-glutamate; N-formimidoyl-L-glutamate from L-histidine: step 1/3. The protein is Histidine ammonia-lyase of Gloeobacter violaceus (strain ATCC 29082 / PCC 7421).